Here is a 215-residue protein sequence, read N- to C-terminus: Cytochrome c biogenesis ATP-binding export protein CcmA (215 aa).

The ABC transporter domain occupies 3–215 (LEAENLAGER…MAAFSVEDIA (213 aa)). 35-42 (GPNGSGKS) contacts ATP.

It belongs to the ABC transporter superfamily. CcmA exporter (TC 3.A.1.107) family. As to quaternary structure, the complex is composed of two ATP-binding proteins (CcmA) and two transmembrane proteins (CcmB).

The protein localises to the cell inner membrane. It carries out the reaction heme b(in) + ATP + H2O = heme b(out) + ADP + phosphate + H(+). Functionally, part of the ABC transporter complex CcmAB involved in the biogenesis of c-type cytochromes; once thought to export heme, this seems not to be the case, but its exact role is uncertain. Responsible for energy coupling to the transport system. This is Cytochrome c biogenesis ATP-binding export protein CcmA from Brucella abortus (strain 2308).